Consider the following 55-residue polypeptide: Large ribosomal subunit protein bL33 (55 aa).

The protein belongs to the bacterial ribosomal protein bL33 family.

The polypeptide is Large ribosomal subunit protein bL33 (Cereibacter sphaeroides (strain ATCC 17029 / ATH 2.4.9) (Rhodobacter sphaeroides)).